The primary structure comprises 151 residues: uncharacterized protein (151 aa).

To equivalent protein in phage 82.

This is an uncharacterized protein from Escherichia coli (strain K12).